The primary structure comprises 166 residues: Putative pre-16S rRNA nuclease (166 aa).

This sequence belongs to the YqgF nuclease family.

It localises to the cytoplasm. Functionally, could be a nuclease involved in processing of the 5'-end of pre-16S rRNA. This chain is Putative pre-16S rRNA nuclease, found in Mesorhizobium japonicum (strain LMG 29417 / CECT 9101 / MAFF 303099) (Mesorhizobium loti (strain MAFF 303099)).